A 285-amino-acid chain; its full sequence is Foldase protein PrsA 2 (285 aa).

An N-terminal signal peptide occupies residues Met-1 to Ala-20. Cys-21 carries the N-palmitoyl cysteine lipid modification. A lipid anchor (S-diacylglycerol cysteine) is attached at Cys-21. Residues Lys-134 to Gly-224 enclose the PpiC domain.

Belongs to the PrsA family.

Its subcellular location is the cell membrane. The catalysed reaction is [protein]-peptidylproline (omega=180) = [protein]-peptidylproline (omega=0). Its function is as follows. Plays a major role in protein secretion by helping the post-translocational extracellular folding of several secreted proteins. Important for the secretion of the protective antigen. The three PsrA proteins in this organism show different but overlapping substrate specificities. The chain is Foldase protein PrsA 2 (prsA2) from Bacillus anthracis.